The following is a 208-amino-acid chain: Phosphoheptose isomerase (208 aa).

In terms of domain architecture, SIS spans 38-200; sequence MALTLARGRK…LFENVLALQP (163 aa). 53 to 55 lines the substrate pocket; sequence NGG. 2 residues coordinate Zn(2+): histidine 62 and glutamate 66. Residues glutamate 66, 95 to 96, 121 to 123, serine 126, and glutamine 173 contribute to the substrate site; these read ND and STS. Zn(2+) contacts are provided by glutamine 173 and histidine 181.

This sequence belongs to the SIS family. GmhA subfamily. In terms of assembly, homotetramer. Zn(2+) serves as cofactor.

Its subcellular location is the cytoplasm. The catalysed reaction is 2 D-sedoheptulose 7-phosphate = D-glycero-alpha-D-manno-heptose 7-phosphate + D-glycero-beta-D-manno-heptose 7-phosphate. It participates in carbohydrate biosynthesis; D-glycero-D-manno-heptose 7-phosphate biosynthesis; D-glycero-alpha-D-manno-heptose 7-phosphate and D-glycero-beta-D-manno-heptose 7-phosphate from sedoheptulose 7-phosphate: step 1/1. Functionally, catalyzes the isomerization of sedoheptulose 7-phosphate in D-glycero-D-manno-heptose 7-phosphate. This is Phosphoheptose isomerase from Nitratidesulfovibrio vulgaris (strain DSM 19637 / Miyazaki F) (Desulfovibrio vulgaris).